We begin with the raw amino-acid sequence, 460 residues long: Adenylosuccinate lyase (460 aa).

N(6)-(1,2-dicarboxyethyl)-AMP is bound by residues arginine 15 to tyrosine 16, asparagine 88 to aspartate 90, and threonine 120 to serine 121. Histidine 169 (proton donor/acceptor) is an active-site residue. N(6)-(1,2-dicarboxyethyl)-AMP is bound at residue glutamine 245. The active-site Proton donor/acceptor is serine 293. N(6)-(1,2-dicarboxyethyl)-AMP is bound by residues serine 294, lysine 299–asparagine 301, asparagine 307, arginine 333, and serine 338–arginine 342.

This sequence belongs to the lyase 1 family. Adenylosuccinate lyase subfamily. As to quaternary structure, homotetramer. Residues from neighboring subunits contribute catalytic and substrate-binding residues to each active site.

It carries out the reaction N(6)-(1,2-dicarboxyethyl)-AMP = fumarate + AMP. The enzyme catalyses (2S)-2-[5-amino-1-(5-phospho-beta-D-ribosyl)imidazole-4-carboxamido]succinate = 5-amino-1-(5-phospho-beta-D-ribosyl)imidazole-4-carboxamide + fumarate. Its pathway is purine metabolism; AMP biosynthesis via de novo pathway; AMP from IMP: step 2/2. It participates in purine metabolism; IMP biosynthesis via de novo pathway; 5-amino-1-(5-phospho-D-ribosyl)imidazole-4-carboxamide from 5-amino-1-(5-phospho-D-ribosyl)imidazole-4-carboxylate: step 2/2. Catalyzes two reactions in de novo purine nucleotide biosynthesis. Catalyzes the breakdown of 5-aminoimidazole- (N-succinylocarboxamide) ribotide (SAICAR or 2-[5-amino-1-(5-phospho-beta-D-ribosyl)imidazole-4-carboxamido]succinate) to 5-aminoimidazole-4-carboxamide ribotide (AICAR or 5-amino-1-(5-phospho-beta-D-ribosyl)imidazole-4-carboxamide) and fumarate, and of adenylosuccinate (ADS or N(6)-(1,2-dicarboxyethyl)-AMP) to adenosine monophosphate (AMP) and fumarate. The polypeptide is Adenylosuccinate lyase (purB) (Buchnera aphidicola subsp. Baizongia pistaciae (strain Bp)).